A 115-amino-acid polypeptide reads, in one-letter code: Protein translation factor SUI1 homolog (115 aa).

The protein belongs to the SUI1 family. As to expression, expressed in all tissues examined.

In terms of biological role, probably involved in translation. The chain is Protein translation factor SUI1 homolog (GOS2) from Oryza sativa subsp. indica (Rice).